A 204-amino-acid polypeptide reads, in one-letter code: Nascent polypeptide-associated complex subunit alpha (204 aa).

The span at 1–19 (MADPRVEELPDEEVPKTNV) shows a compositional bias: basic and acidic residues. 2 disordered regions span residues 1–48 (MADP…HSRN) and 119–167 (LAAA…GLEA). The segment covering 22–32 (AGSDSESEAGE) has biased composition (acidic residues). The NAC-A/B domain occupies 46-111 (SRNEKKARKA…AKIEDLNSQA (66 aa)). Residues 119–128 (LAAAEAAAGE) show a composition bias toward low complexity. Positions 129–151 (HAGHDHDHDHGKGKAPETEAKKE) are enriched in basic and acidic residues. Acidic residues predominate over residues 152 to 164 (EEEDDGEEVDETG). In terms of domain architecture, UBA spans 165–204 (LEAKDIELVMAQANVSRKKAVKALRENDNDIVNSIMALSI).

It belongs to the NAC-alpha family. As to quaternary structure, part of the nascent polypeptide-associated complex (NAC), consisting of egd2 and egd1. NAC associates with ribosomes via egd1.

Its subcellular location is the cytoplasm. The protein localises to the nucleus. Component of the nascent polypeptide-associated complex (NAC), a dynamic component of the ribosomal exit tunnel, protecting the emerging polypeptides from interaction with other cytoplasmic proteins to ensure appropriate nascent protein targeting. The NAC complex also promotes mitochondrial protein import by enhancing productive ribosome interactions with the outer mitochondrial membrane and blocks the inappropriate interaction of ribosomes translating non-secretory nascent polypeptides with translocation sites in the membrane of the endoplasmic reticulum. Egd2 may also be involved in transcription regulation. The protein is Nascent polypeptide-associated complex subunit alpha (egd2) of Aspergillus clavatus (strain ATCC 1007 / CBS 513.65 / DSM 816 / NCTC 3887 / NRRL 1 / QM 1276 / 107).